A 242-amino-acid chain; its full sequence is Small ribosomal subunit protein uS3 (242 aa).

Positions 39–110 constitute a KH type-2 domain; sequence IRRFIHKKYG…QVRINVVEVE (72 aa). The tract at residues 216-242 is disordered; sequence QSMPVGASPRRRGNRRPQQFEDRSNEG. Positions 233–242 are enriched in basic and acidic residues; sequence QQFEDRSNEG.

It belongs to the universal ribosomal protein uS3 family. As to quaternary structure, part of the 30S ribosomal subunit. Forms a tight complex with proteins S10 and S14.

Functionally, binds the lower part of the 30S subunit head. Binds mRNA in the 70S ribosome, positioning it for translation. This chain is Small ribosomal subunit protein uS3, found in Prochlorococcus marinus (strain MIT 9303).